We begin with the raw amino-acid sequence, 949 residues long: Glycine dehydrogenase (decarboxylating) (949 aa).

The residue at position 700 (K700) is an N6-(pyridoxal phosphate)lysine.

It belongs to the GcvP family. In terms of assembly, the glycine cleavage system is composed of four proteins: P, T, L and H. Requires pyridoxal 5'-phosphate as cofactor.

It carries out the reaction N(6)-[(R)-lipoyl]-L-lysyl-[glycine-cleavage complex H protein] + glycine + H(+) = N(6)-[(R)-S(8)-aminomethyldihydrolipoyl]-L-lysyl-[glycine-cleavage complex H protein] + CO2. Functionally, the glycine cleavage system catalyzes the degradation of glycine. The P protein binds the alpha-amino group of glycine through its pyridoxal phosphate cofactor; CO(2) is released and the remaining methylamine moiety is then transferred to the lipoamide cofactor of the H protein. In Christiangramia forsetii (strain DSM 17595 / CGMCC 1.15422 / KT0803) (Gramella forsetii), this protein is Glycine dehydrogenase (decarboxylating).